The primary structure comprises 37 residues: Mating pheromone Er-20 (37 aa).

Intrachain disulfides connect cysteine 3–cysteine 18, cysteine 10–cysteine 32, and cysteine 15–cysteine 24.

In terms of assembly, homodimer.

Its subcellular location is the secreted. Functionally, mating ciliate pheromones (or gamones) are diffusible extracellular communication signals that distinguish different intraspecific classes of cells commonly referred to as 'mating types'. They prepare the latter for conjugation by changing their cell surface properties. This Euplotes raikovi protein is Mating pheromone Er-20 (MAT20).